Consider the following 139-residue polypeptide: Putative pre-16S rRNA nuclease (139 aa).

Belongs to the YqgF nuclease family.

It localises to the cytoplasm. Functionally, could be a nuclease involved in processing of the 5'-end of pre-16S rRNA. This Rubrobacter xylanophilus (strain DSM 9941 / JCM 11954 / NBRC 16129 / PRD-1) protein is Putative pre-16S rRNA nuclease.